We begin with the raw amino-acid sequence, 507 residues long: ATP synthase subunit alpha, mitochondrial (507 aa).

G171–T178 is a binding site for ATP.

Belongs to the ATPase alpha/beta chains family. F-type ATPases have 2 components, CF(1) - the catalytic core - and CF(0) - the membrane proton channel. CF(1) has five subunits: alpha(3), beta(3), gamma(1), delta(1), epsilon(1). CF(0) has three main subunits: a, b and c.

The protein localises to the mitochondrion. It is found in the mitochondrion inner membrane. Functionally, mitochondrial membrane ATP synthase (F(1)F(0) ATP synthase or Complex V) produces ATP from ADP in the presence of a proton gradient across the membrane which is generated by electron transport complexes of the respiratory chain. F-type ATPases consist of two structural domains, F(1) - containing the extramembraneous catalytic core, and F(0) - containing the membrane proton channel, linked together by a central stalk and a peripheral stalk. During catalysis, ATP synthesis in the catalytic domain of F(1) is coupled via a rotary mechanism of the central stalk subunits to proton translocation. Subunits alpha and beta form the catalytic core in F(1). Rotation of the central stalk against the surrounding alpha(3)beta(3) subunits leads to hydrolysis of ATP in three separate catalytic sites on the beta subunits. Subunit alpha does not bear the catalytic high-affinity ATP-binding sites. The sequence is that of ATP synthase subunit alpha, mitochondrial (ATPA) from Raphanus sativus (Radish).